A 142-amino-acid chain; its full sequence is MADKFDANDETRTVYAVVYDNDQPVSTGQFLAETKIEARLTRIVTLADYCGCGYGAKVTEALETYTRREGFYQLTIHSELTAQTFYENLGYQSYGPKCLEDGEYCQSLAKTILKWEKNMDIAMLIAIVGGLLGCYLYLTKNN.

The 120-residue stretch at Met1 to Asp120 folds into the N-acetyltransferase domain.

The protein belongs to the acetyltransferase family.

This is an uncharacterized protein from Streptococcus pyogenes serotype M1.